Consider the following 71-residue polypeptide: uncharacterized protein (71 aa).

Topologically, residues 1–16 (MLLLYTVMILTCIIYK) are cytoplasmic. A helical transmembrane segment spans residues 17-38 (LVPDNKYWPIHMFFFIMIYIVY). The Extracellular portion of the chain corresponds to 39-69 (MYEKLDIHEKSQFWNYTMARLSGHPVPTIIC). A glycan (N-linked (GlcNAc...) asparagine; by host) is linked at N53.

This sequence belongs to the asfivirus X69R family.

The protein resides in the host membrane. This is an uncharacterized protein from African swine fever virus (isolate Pig/Kenya/KEN-50/1950) (ASFV).